The following is a 152-amino-acid chain: UPF0178 protein swp_1285 (152 aa).

The protein belongs to the UPF0178 family.

The sequence is that of UPF0178 protein swp_1285 from Shewanella piezotolerans (strain WP3 / JCM 13877).